A 447-amino-acid polypeptide reads, in one-letter code: Argininosuccinate synthase (447 aa).

ATP contacts are provided by residues 17 to 25 (AFSGGLDTS) and Ala43. Tyr99 is a binding site for L-citrulline. The ATP site is built by Gly129 and Thr131. L-aspartate is bound by residues Thr131, Asn135, and Asp136. An L-citrulline-binding site is contributed by Asn135. Position 136 (Asp136) interacts with ATP. L-citrulline is bound by residues Arg139 and Ser192. Asp194 is an ATP binding site. Thr201, Glu203, and Glu280 together coordinate L-citrulline.

It belongs to the argininosuccinate synthase family. Type 2 subfamily. In terms of assembly, homotetramer.

Its subcellular location is the cytoplasm. The catalysed reaction is L-citrulline + L-aspartate + ATP = 2-(N(omega)-L-arginino)succinate + AMP + diphosphate + H(+). It participates in amino-acid biosynthesis; L-arginine biosynthesis; L-arginine from L-ornithine and carbamoyl phosphate: step 2/3. The chain is Argininosuccinate synthase from Escherichia coli O127:H6 (strain E2348/69 / EPEC).